The primary structure comprises 741 residues: Zinc finger and BTB domain-containing protein 20 (741 aa).

The segment covering 1 to 17 has biased composition (basic and acidic residues); it reads MLERKKPKTAENQKASE. The interval 1–32 is disordered; it reads MLERKKPKTAENQKASEENEITQPGGSSAKPG. Residues 104-167 enclose the BTB domain; it reads CDVTVRIHGS…MYSGVLRVSQ (64 aa). The disordered stretch occupies residues 203–235; the sequence is GIQDSGQDTPRGTPESGTSGQSSDTESGYLQSH. The span at 206-235 shows a compositional bias: polar residues; the sequence is DSGQDTPRGTPESGTSGQSSDTESGYLQSH. The residue at position 211 (T211) is a Phosphothreonine. A Glycyl lysine isopeptide (Lys-Gly) (interchain with G-Cter in SUMO1); alternate cross-link involves residue K330. K330 is covalently cross-linked (Glycyl lysine isopeptide (Lys-Gly) (interchain with G-Cter in SUMO2); alternate). Positions 350-440 are disordered; the sequence is RNESEECTED…SSPERSNEVE (91 aa). The residue at position 353 (S353) is a Phosphoserine. Residues 354–367 are compositionally biased toward acidic residues; it reads EECTEDTDQAEGTE. T357 is modified (phosphothreonine). A Glycyl lysine isopeptide (Lys-Gly) (interchain with G-Cter in SUMO2) cross-link involves residue K371. Residues 404 to 423 show a composition bias toward low complexity; that stretch reads AEPTQPEQAAEAPAEGGPQT. Positions 424 to 434 are enriched in polar residues; the sequence is NQLETGASSPE. 4 consecutive C2H2-type zinc fingers follow at residues 578–600, 606–628, 634–656, and 662–684; these read YECT…MFVH, HQCS…MVTH, YQCS…MRLH, and YECY…VALH. A phosphothreonine mark is found at T690 and T695. A C2H2-type 5 zinc finger spans residues 715-737; sequence YVCSVCPAKFDQIEQFNDHMRMH. K723 participates in a covalent cross-link: Glycyl lysine isopeptide (Lys-Gly) (interchain with G-Cter in SUMO2).

As to quaternary structure, can homodimerize. Binds to DNA. In terms of processing, sumoylated with SUMO1. Expressed in spleen, lymph node, thymus, peripheral blood leukocytes, and fetal liver.

It localises to the nucleus. Functionally, may be a transcription factor that may be involved in hematopoiesis, oncogenesis, and immune responses. Plays a role in postnatal myogenesis, may be involved in the regulation of satellite cells self-renewal. The protein is Zinc finger and BTB domain-containing protein 20 (ZBTB20) of Homo sapiens (Human).